The sequence spans 462 residues: General transcription factor IIH subunit 4 (462 aa).

It belongs to the TFB2 family. As to quaternary structure, component of the 7-subunit TFIIH core complex composed of XPB/ERCC3, XPD/ERCC2, GTF2H1, GTF2H2, GTF2H3, GTF2H4 and GTF2H5, which is active in NER. The core complex associates with the 3-subunit CDK-activating kinase (CAK) module composed of CCNH/cyclin H, CDK7 and MNAT1 to form the 10-subunit holoenzyme (holo-TFIIH) active in transcription. Part of TBP-based Pol II pre-initiation complex (PIC), in which Pol II core assembles with general transcription factors and other specific initiation factors including GTF2E1, GTF2E2, GTF2F1, GTF2F2, TCEA1, ERCC2, ERCC3, GTF2H2, GTF2H3, GTF2H4, GTF2H5, GTF2A1, GTF2A2, GTF2B and TBP; this large multi-subunit PIC complex mediates DNA unwinding and targets Pol II core to the transcription start site where the first phosphodiester bond forms.

The protein localises to the nucleus. Its function is as follows. Component of the general transcription and DNA repair factor IIH (TFIIH) core complex, which is involved in general and transcription-coupled nucleotide excision repair (NER) of damaged DNA and, when complexed to CAK, in RNA transcription by RNA polymerase II. In NER, TFIIH acts by opening DNA around the lesion to allow the excision of the damaged oligonucleotide and its replacement by a new DNA fragment. In transcription, TFIIH has an essential role in transcription initiation. When the pre-initiation complex (PIC) has been established, TFIIH is required for promoter opening and promoter escape. Phosphorylation of the C-terminal tail (CTD) of the largest subunit of RNA polymerase II by the kinase module CAK controls the initiation of transcription. In terms of biological role, stimulates the ATPase activity of TFIIH subunit XPB/ERCC3. The chain is General transcription factor IIH subunit 4 (GTF2H4) from Homo sapiens (Human).